A 2594-amino-acid polypeptide reads, in one-letter code: Immunoglobulin superfamily member 10 (2594 aa).

Residues 1–25 (MQKRGREVSCLLISLTAICLVVTPG) form the signal peptide. The LRRNT domain occupies 29-56 (CPRRCACYVPTEVHCTFRYLTSIPDGIP). LRR repeat units lie at residues 58–79 (NVER…DFSG), 82–103 (RLEL…TFSG), 106–127 (SLQV…TLYG), 130–151 (SLTR…AFYG), 154–175 (LLRL…TFVS), and 186–207 (FIKY…MVSS). One can recognise an LRRCT domain in the interval 219–281 (NPWTCDCHLK…VPSGSFLCTK (63 aa)). Asn439 carries N-linked (GlcNAc...) asparagine glycosylation. Ig-like C2-type domains lie at 461–567 (PKAE…YRIT) and 571–661 (PYVE…FQVS). 2 cysteine pairs are disulfide-bonded: Cys497/Cys551 and Cys595/Cys645. A glycan (N-linked (GlcNAc...) asparagine) is linked at Asn627. Over residues 670–685 (IEHDRDIDGSGLEEPK) the composition is skewed to basic and acidic residues. Disordered stretches follow at residues 670–725 (IEHD…RDLT) and 963–1008 (VSSN…GRER). A compositionally biased stretch (basic residues) spans 715 to 725 (IHKKNKHRDLT). A compositionally biased stretch (basic and acidic residues) spans 972-984 (TTKDPGFSKRPSD). Positions 985 to 1003 (SHTTAPSLFQTPRNNSTGN) are enriched in polar residues. The N-linked (GlcNAc...) asparagine glycan is linked to Asn1044. Disordered stretches follow at residues 1228 to 1251 (TATK…PSTT), 1333 to 1364 (VRSK…GYST), and 1428 to 1457 (SQES…PSPP). The span at 1333–1342 (VRSKKAKDQT) shows a compositional bias: basic and acidic residues. A compositionally biased stretch (polar residues) spans 1355–1364 (TPRQISGYST). 10 Ig-like C2-type domains span residues 1619 to 1710 (PRII…VTLS), 1715 to 1807 (PARI…VKIQ), 1812 to 1901 (PPVI…RRVV), 1912 to 2005 (PRIE…VRLR), 2008 to 2106 (PAKI…VHLT), 2112 to 2200 (PRIR…YKLD), 2205 to 2302 (PPLI…LKVL), 2308 to 2398 (PTFR…ILLE), 2403 to 2493 (PVIL…VPVT), and 2499 to 2592 (PRII…TYIQ). Disulfide bonds link Cys1641–Cys1694, Cys1738–Cys1791, and Cys1835–Cys1888. The stretch at 1658 to 1681 (SGREISRGIQKTRFHVLPNGTLSI) is one LRR 11 repeat. Residues Asn1676, Asn1780, Asn1870, and Asn1933 are each glycosylated (N-linked (GlcNAc...) asparagine). Intrachain disulfides connect Cys1934–Cys1987, Cys2031–Cys2090, Cys2134–Cys2184, Cys2232–Cys2284, Cys2330–Cys2382, Cys2425–Cys2477, and Cys2521–Cys2576. Asn2072 carries N-linked (GlcNAc...) asparagine glycosylation. Asn2364 is a glycosylation site (N-linked (GlcNAc...) asparagine). Position 2574 is a phosphotyrosine (Tyr2574).

In the embryo, expressed in the nasal mesenchyme.

It is found in the secreted. Involved in the control of early migration of neurons expressing gonadotropin-releasing hormone (GNRH neurons). May be involved in the maintenance of osteochondroprogenitor cells pool. The protein is Immunoglobulin superfamily member 10 (Igsf10) of Mus musculus (Mouse).